The sequence spans 141 residues: Transcriptional regulator MraZ (141 aa).

2 SpoVT-AbrB domains span residues 5 to 47 (TFNI…KPQD) and 76 to 119 (ANFV…DKKL).

This sequence belongs to the MraZ family. In terms of assembly, homooctamer. Forms a ring.

The protein resides in the cytoplasm. The protein localises to the nucleoid. The chain is Transcriptional regulator MraZ from Mycoplasma pneumoniae (strain ATCC 29342 / M129 / Subtype 1) (Mycoplasmoides pneumoniae).